A 275-amino-acid polypeptide reads, in one-letter code: Tryptophan synthase alpha chain (275 aa).

Residues glutamate 58 and aspartate 69 each act as proton acceptor in the active site.

The protein belongs to the TrpA family. As to quaternary structure, tetramer of two alpha and two beta chains. Ubiquitously expressed at low levels in seedlings, roots, hypocotyls, cotyledons, stems, leaves, inflorescences, flowers, siliques and seeds.

The protein localises to the cytoplasm. The catalysed reaction is (1S,2R)-1-C-(indol-3-yl)glycerol 3-phosphate + L-serine = D-glyceraldehyde 3-phosphate + L-tryptophan + H2O. It catalyses the reaction (1S,2R)-1-C-(indol-3-yl)glycerol 3-phosphate = indole + D-glyceraldehyde 3-phosphate. Its pathway is amino-acid biosynthesis; L-tryptophan biosynthesis; L-tryptophan from chorismate: step 5/5. In terms of biological role, the alpha subunit is responsible for the aldol cleavage of indoleglycerol phosphate to indole and glyceraldehyde 3-phosphate. Contributes to the tryptophan-independent indole biosynthesis, and possibly to auxin production. In Arabidopsis thaliana (Mouse-ear cress), this protein is Tryptophan synthase alpha chain (TRPA1).